The sequence spans 905 residues: Transcription termination factor 1 (905 aa).

Basic and acidic residues-rich tracts occupy residues 1-16 and 24-33; these read MEGESSRFEIHTPVSD and IHKERPQKHS. Positions 1–33 are disordered; sequence MEGESSRFEIHTPVSDKKKKKCSIHKERPQKHS. Positions 1-223 are N-terminal region (NRD); sequence MEGESSRFEI…AHKNKSKKKK (223 aa). Serine 65 is modified (phosphoserine). The disordered stretch occupies residues 151 to 443; that stretch reads SHAHKSEALH…KSRPRQKKTQ (293 aa). Basic residues-rich tracts occupy residues 163–174 and 215–226; these read VREKKNKKHQRK and HKNKSKKKKKKS. Serine 240 carries the post-translational modification Phosphoserine. At threonine 248 the chain carries Phosphothreonine. 3 stretches are compositionally biased toward basic residues: residues 270 to 283, 330 to 339, and 385 to 401; these read THKKKSKKKKKKKS, NKSKKKKKKS, and TKKKSKKRKLTSVKRAR. At serine 403 the chain carries Phosphoserine. Positions 410–419 are enriched in polar residues; it reads PSKNSESTLF. Residue tyrosine 476 is modified to Phosphotyrosine. Phosphoserine occurs at positions 478, 481, and 487. The segment at 498–886 is may be involved in interaction with ARF; that stretch reads LQEFIPNIKD…IEKESEGQAP (389 aa). 2 Myb-like domains span residues 612 to 661 and 661 to 745; these read DVNN…SQIS and SSQR…TEIL. Lysine 700 participates in a covalent cross-link: Glycyl lysine isopeptide (Lys-Gly) (interchain with G-Cter in SUMO2). Serine 872 carries the post-translational modification Phosphoserine.

Oligomer. The oligomeric structure enables to interact simultaneously with two separate DNA fragments. Interacts with BAZ2A/TIP5. Interacts with CAVIN1. Interacts (via the N-terminal region (NRD) and a C-terminal region) with CDKN2A/ARF; the interaction is direct. Interacts (via C-terminal region) with NPM1/B23.

The protein resides in the nucleus. It is found in the nucleolus. Its subcellular location is the nucleoplasm. In terms of biological role, multifunctional nucleolar protein that terminates ribosomal gene transcription, mediates replication fork arrest and regulates RNA polymerase I transcription on chromatin. Plays a dual role in rDNA regulation, being involved in both activation and silencing of rDNA transcription. Interaction with BAZ2A/TIP5 recovers DNA-binding activity. The polypeptide is Transcription termination factor 1 (TTF1) (Homo sapiens (Human)).